We begin with the raw amino-acid sequence, 372 residues long: Aminomethyltransferase (372 aa).

It belongs to the GcvT family. The glycine cleavage system is composed of four proteins: P, T, L and H.

It carries out the reaction N(6)-[(R)-S(8)-aminomethyldihydrolipoyl]-L-lysyl-[protein] + (6S)-5,6,7,8-tetrahydrofolate = N(6)-[(R)-dihydrolipoyl]-L-lysyl-[protein] + (6R)-5,10-methylene-5,6,7,8-tetrahydrofolate + NH4(+). The glycine cleavage system catalyzes the degradation of glycine. The sequence is that of Aminomethyltransferase from Burkholderia multivorans (strain ATCC 17616 / 249).